The primary structure comprises 335 residues: DNA-directed RNA polymerases I and III subunit RPAC1 (335 aa).

Serine 2 carries the post-translational modification N-acetylserine. A Phosphoserine modification is found at serine 17.

The protein belongs to the archaeal Rpo3/eukaryotic RPB3 RNA polymerase subunit family. As to quaternary structure, component of the RNA polymerase I (Pol I) complex consisting of 14 subunits: RPA135, RPA190, RPC40, RPA14, RPB5, RPO26, RPA43, RPB8, RPA12, RPB10, RPC19, RPC10, RPA49 and RPA34. The complex is composed of a horseshoe-shaped core containing ten subunits (RPA135, RPA190, RPB5, RPO26, RPB8, RPB10, RPC10, RPA12, RPC19 and RPC40) where RPA135 and RPA190 form the DNA-binding cleft. Outside of the core, RPA14 and RPA43 form the stalk that mediates interactions with transcription initiation factors and newly synthesized RNA. Component of the RNA polymerase III (Pol III) complex consisting of at least 17 subunits. Interacts with the RPC19/RPAC2 and RPC53/RPC4. Interacts with retrotransposons Ty integrase, targeting Ty1, Ty2 and Ty4 integration upstream of pol III-transcribed genes.

Its subcellular location is the nucleus. It is found in the nucleolus. In terms of biological role, DNA-dependent RNA polymerases catalyze the transcription of DNA into RNA using the four ribonucleoside triphosphates as substrates. Common component of RNA polymerases I (Pol I) and III (Pol III) which synthesize ribosomal RNA precursors and small RNAs, such as 5S rRNA and tRNAs, respectively. RPC40 is part of the polymerase core and may function as a clamp element that moves to open and close the cleft. Plays an important role in targeting retrotransposons Ty integration upstream of pol III-transcribed genes such as tRNA genes, allowing Ty1, Ty2 and Ty4 to proliferate and yet minimizing genetic damage. This chain is DNA-directed RNA polymerases I and III subunit RPAC1, found in Saccharomyces cerevisiae (strain ATCC 204508 / S288c) (Baker's yeast).